The chain runs to 214 residues: Adenylate kinase (214 aa).

Residue Gly10–Thr15 coordinates ATP. Positions Ser30 to Val59 are NMP. AMP is bound by residues Thr31, Arg36, Glu57–Val59, Gly85–Arg88, and Gln92. The segment at Gly126–Asp163 is LID. Arg127 is an ATP binding site. Residues Cys130 and Cys133 each contribute to the Zn(2+) site. Thr136–Tyr137 is a binding site for ATP. Zn(2+) contacts are provided by Cys150 and Cys153. Residues Arg160 and Arg171 each coordinate AMP. Gly199 is an ATP binding site.

Belongs to the adenylate kinase family. In terms of assembly, monomer.

The protein localises to the cytoplasm. The enzyme catalyses AMP + ATP = 2 ADP. It participates in purine metabolism; AMP biosynthesis via salvage pathway; AMP from ADP: step 1/1. Functionally, catalyzes the reversible transfer of the terminal phosphate group between ATP and AMP. Plays an important role in cellular energy homeostasis and in adenine nucleotide metabolism. In Ruminiclostridium cellulolyticum (strain ATCC 35319 / DSM 5812 / JCM 6584 / H10) (Clostridium cellulolyticum), this protein is Adenylate kinase.